The chain runs to 201 residues: Ciliary microtubule inner protein 2C (201 aa).

Belongs to the CIMIP2 family. Microtubule inner protein component of sperm flagellar doublet microtubules. In terms of tissue distribution, expressed in airway epithelial cells.

The protein localises to the cytoplasm. It is found in the cytoskeleton. The protein resides in the cilium axoneme. Its subcellular location is the flagellum axoneme. Its function is as follows. Microtubule inner protein (MIP) part of the dynein-decorated doublet microtubules (DMTs) in cilia axoneme, which is required for motile cilia beating. Binds to the intra-tubulin interfaces. In Homo sapiens (Human), this protein is Ciliary microtubule inner protein 2C.